Consider the following 345-residue polypeptide: GTPase Obg (345 aa).

The Obg domain occupies M1 to I159. The OBG-type G domain occupies A160 to D327. Residues G166 to S173, F191 to H195, D212 to G215, S279 to D282, and S308 to Q310 each bind GTP. Positions 173 and 193 each coordinate Mg(2+).

Belongs to the TRAFAC class OBG-HflX-like GTPase superfamily. OBG GTPase family. As to quaternary structure, monomer. It depends on Mg(2+) as a cofactor.

It localises to the cytoplasm. An essential GTPase which binds GTP, GDP and possibly (p)ppGpp with moderate affinity, with high nucleotide exchange rates and a fairly low GTP hydrolysis rate. Plays a role in control of the cell cycle, stress response, ribosome biogenesis and in those bacteria that undergo differentiation, in morphogenesis control. The polypeptide is GTPase Obg (Azorhizobium caulinodans (strain ATCC 43989 / DSM 5975 / JCM 20966 / LMG 6465 / NBRC 14845 / NCIMB 13405 / ORS 571)).